The primary structure comprises 639 residues: Chaperone protein DnaK (639 aa).

Residue Thr195 is modified to Phosphothreonine; by autocatalysis. The segment covering Asn601–Gln618 has biased composition (low complexity). Positions Asn601 to Lys639 are disordered. Residues Val627–Lys639 show a composition bias toward acidic residues.

Belongs to the heat shock protein 70 family.

Acts as a chaperone. The sequence is that of Chaperone protein DnaK from Acidobacterium capsulatum (strain ATCC 51196 / DSM 11244 / BCRC 80197 / JCM 7670 / NBRC 15755 / NCIMB 13165 / 161).